The primary structure comprises 99 residues: NADH-ubiquinone oxidoreductase chain 4L (99 aa).

3 consecutive transmembrane segments (helical) span residues 1–21 (MTIY…FFTQ), 25–45 (ILSL…SVAV), and 56–76 (VMIL…SLLV).

It belongs to the complex I subunit 4L family.

It localises to the mitochondrion membrane. It catalyses the reaction a ubiquinone + NADH + 5 H(+)(in) = a ubiquinol + NAD(+) + 4 H(+)(out). In terms of biological role, core subunit of the mitochondrial membrane respiratory chain NADH dehydrogenase (Complex I) that is believed to belong to the minimal assembly required for catalysis. Complex I functions in the transfer of electrons from NADH to the respiratory chain. The immediate electron acceptor for the enzyme is believed to be ubiquinone. The protein is NADH-ubiquinone oxidoreductase chain 4L (ND4L) of Albinaria caerulea (Land snail).